The primary structure comprises 271 residues: Acetyl-coenzyme A carboxylase carboxyl transferase subunit alpha (271 aa).

The CoA carboxyltransferase C-terminal domain maps to 1–247 (MSRELIRTVD…KKTILEALGE (247 aa)).

The protein belongs to the AccA family. In terms of assembly, acetyl-CoA carboxylase is a heterohexamer composed of biotin carboxyl carrier protein (AccB), biotin carboxylase (AccC) and two subunits each of ACCase subunit alpha (AccA) and ACCase subunit beta (AccD).

It localises to the cytoplasm. The catalysed reaction is N(6)-carboxybiotinyl-L-lysyl-[protein] + acetyl-CoA = N(6)-biotinyl-L-lysyl-[protein] + malonyl-CoA. Its pathway is lipid metabolism; malonyl-CoA biosynthesis; malonyl-CoA from acetyl-CoA: step 1/1. Functionally, component of the acetyl coenzyme A carboxylase (ACC) complex. First, biotin carboxylase catalyzes the carboxylation of biotin on its carrier protein (BCCP) and then the CO(2) group is transferred by the carboxyltransferase to acetyl-CoA to form malonyl-CoA. In Clostridium perfringens (strain SM101 / Type A), this protein is Acetyl-coenzyme A carboxylase carboxyl transferase subunit alpha.